The following is a 567-amino-acid chain: Hydrogenase-2 large chain (567 aa).

Ni(2+)-binding residues include C61, C64, C546, and C549. Positions 553-567 (VVDADGNEVVSVKVL) are excised as a propeptide.

This sequence belongs to the [NiFe]/[NiFeSe] hydrogenase large subunit family. Heterodimer of a large and a small subunit. It depends on Ni(2+) as a cofactor.

It is found in the cell membrane. The catalysed reaction is H2 + A = AH2. In terms of biological role, this is one of three E.coli hydrogenases synthesized in response to different physiological conditions. HYD2 is involved in hydrogen uptake. The sequence is that of Hydrogenase-2 large chain (hybC) from Escherichia coli O157:H7.